Consider the following 434-residue polypeptide: Double-stranded RNA-binding protein 2 (434 aa).

DRBM domains are found at residues 1 to 70 and 87 to 155; these read MYKN…ALSN and VYKN…SLKQ. The segment at 402–434 is disordered; that stretch reads EKTASKETERAEFKDSSKGEPETARERLENLKI.

As to quaternary structure, heterodimer with DRB1 or DRB5. Interacts with DCL1 and DCL5.

It is found in the cytoplasm. In terms of biological role, binds double-stranded RNA. May be involved in RNA-mediated silencing. In Arabidopsis thaliana (Mouse-ear cress), this protein is Double-stranded RNA-binding protein 2 (DRB2).